Reading from the N-terminus, the 670-residue chain is Probable beta-glucosidase N (670 aa).

Positions 1–21 are cleaved as a signal peptide; that stretch reads MHSNILPVLTSVATLLGLVQG. N-linked (GlcNAc...) asparagine glycosylation occurs at Asn51. The tract at residues 65-87 is disordered; the sequence is FEPSDGVRSVQGSGKDYDNPAMR. N-linked (GlcNAc...) asparagine glycosylation occurs at Asn141. Asp152 is an active-site residue. N-linked (GlcNAc...) asparagine glycosylation is found at Asn184, Asn248, Asn330, and Asn417.

It belongs to the glycosyl hydrolase 3 family.

Its subcellular location is the secreted. It carries out the reaction Hydrolysis of terminal, non-reducing beta-D-glucosyl residues with release of beta-D-glucose.. It participates in glycan metabolism; cellulose degradation. Functionally, beta-glucosidases are one of a number of cellulolytic enzymes involved in the degradation of cellulosic biomass. Catalyzes the last step releasing glucose from the inhibitory cellobiose. This Emericella nidulans (strain FGSC A4 / ATCC 38163 / CBS 112.46 / NRRL 194 / M139) (Aspergillus nidulans) protein is Probable beta-glucosidase N (bglN).